The primary structure comprises 106 residues: uncharacterized protein (106 aa).

The protein belongs to the HesB/IscA family.

This is an uncharacterized protein from Bradyrhizobium diazoefficiens (strain JCM 10833 / BCRC 13528 / IAM 13628 / NBRC 14792 / USDA 110).